We begin with the raw amino-acid sequence, 446 residues long: UDP-N-acetylmuramoylalanine--D-glutamate ligase (446 aa).

115 to 121 lines the ATP pocket; that stretch reads GSNGKST.

This sequence belongs to the MurCDEF family.

Its subcellular location is the cytoplasm. The catalysed reaction is UDP-N-acetyl-alpha-D-muramoyl-L-alanine + D-glutamate + ATP = UDP-N-acetyl-alpha-D-muramoyl-L-alanyl-D-glutamate + ADP + phosphate + H(+). It functions in the pathway cell wall biogenesis; peptidoglycan biosynthesis. Functionally, cell wall formation. Catalyzes the addition of glutamate to the nucleotide precursor UDP-N-acetylmuramoyl-L-alanine (UMA). In Hahella chejuensis (strain KCTC 2396), this protein is UDP-N-acetylmuramoylalanine--D-glutamate ligase.